Consider the following 475-residue polypeptide: Sulfate adenylyltransferase subunit 1 (475 aa).

In terms of domain architecture, tr-type G spans 25–239 (KSLLRFLTCG…EVLETVEIQR (215 aa)). Residues 34-41 (GSVDDGKS) form a G1 region. 34-41 (GSVDDGKS) lines the GTP pocket. The segment at 92–96 (GITID) is G2. The G3 stretch occupies residues 113–116 (DTPG). GTP contacts are provided by residues 113–117 (DTPGH) and 168–171 (NKMD). The interval 168 to 171 (NKMD) is G4. The interval 206–208 (SAL) is G5.

The protein belongs to the TRAFAC class translation factor GTPase superfamily. Classic translation factor GTPase family. CysN/NodQ subfamily. In terms of assembly, heterodimer composed of CysD, the smaller subunit, and CysN.

The enzyme catalyses sulfate + ATP + H(+) = adenosine 5'-phosphosulfate + diphosphate. The protein operates within sulfur metabolism; hydrogen sulfide biosynthesis; sulfite from sulfate: step 1/3. With CysD forms the ATP sulfurylase (ATPS) that catalyzes the adenylation of sulfate producing adenosine 5'-phosphosulfate (APS) and diphosphate, the first enzymatic step in sulfur assimilation pathway. APS synthesis involves the formation of a high-energy phosphoric-sulfuric acid anhydride bond driven by GTP hydrolysis by CysN coupled to ATP hydrolysis by CysD. The polypeptide is Sulfate adenylyltransferase subunit 1 (Shigella flexneri).